Consider the following 269-residue polypeptide: Voltage-gated hydrogen channel 1 (269 aa).

Residues 1-96 (MTSHDPKAVT…RLRKLFSSHR (96 aa)) are Cytoplasmic-facing. Thr29 carries the phosphothreonine modification. The segment at 46–79 (ENEEEEEEPAPTSAEGEGNAEGPDAEAGSASTPR) is disordered. The residue at position 93 (Ser93) is a Phosphoserine. A helical transmembrane segment spans residues 97 to 117 (FQVIIICLVVLDALLVLAELL). The Extracellular portion of the chain corresponds to 118 to 134 (LDLKIIEPDEQDYAVTA). Residues 135 to 157 (FHYMSFAILVFFMLEIFFKIFVF) traverse the membrane as a helical segment. Residues 158 to 165 (RLEFFHHK) lie on the Cytoplasmic side of the membrane. A helical transmembrane segment spans residues 166–186 (FEILDAFVVVVSFVLDLVLLF). Over 187-193 (KSHHFEA) the chain is Extracellular. A helical transmembrane segment spans residues 194-214 (LGLLILLRLWRVARIINGIII). The Cytoplasmic segment spans residues 215-269 (SVKTRSERQILRLKQINIQLATKIQHLEFSCSEKEQEIERLNKLLKQNGLLGDVN). The stretch at 221-261 (ERQILRLKQINIQLATKIQHLEFSCSEKEQEIERLNKLLKQ) forms a coiled coil.

The protein belongs to the voltage-gated proton channel (VPC) (TC 1.A.51) family. In terms of assembly, homodimer; each protomer forms its own proton conduction pathway. Phosphorylated in vitro by PRKCD. Phosphorylation may enhance channel gating. In terms of tissue distribution, enriched in immune tissues, such as bone marrow, macrophages and spleen.

It is found in the cell membrane. It localises to the apical cell membrane. The protein localises to the cytoplasmic vesicle. Its subcellular location is the phagosome membrane. The protein resides in the cell projection. It is found in the cilium. It localises to the flagellum membrane. The enzyme catalyses H(+)(in) = H(+)(out). The dimers display cooperative channel gating. The channel activity is inhibited by zinc ions. Its function is as follows. Voltage-gated proton-selective channel that conducts outward proton currents in response to intracellular acidification. Lacks a canonical ion-channel pore domain and mediates proton permeability via its voltage sensor domain. Provides for proton efflux that compensates for electron charge generated by NADPH oxidase activity either in the extracellular or phagosomal compartments, thus enabling the production of high levels of bactericidal reactive oxygen species during the respiratory burst. Opens when the pH of airway surface liquid exceeds 7 and contributes to respiratory epithelial acid secretion to maintain pH in the mucosa. The sequence is that of Voltage-gated hydrogen channel 1 from Mus musculus (Mouse).